Here is a 146-residue protein sequence, read N- to C-terminus: NADH-quinone oxidoreductase subunit A (146 aa).

Transmembrane regions (helical) follow at residues 14 to 34 (FALF…GGFL), 68 to 88 (LVAM…AWAV), and 96 to 116 (IGFI…IYLV).

Belongs to the complex I subunit 3 family. As to quaternary structure, NDH-1 is composed of 13 different subunits. Subunits NuoA, H, J, K, L, M, N constitute the membrane sector of the complex.

It localises to the cell inner membrane. The catalysed reaction is a quinone + NADH + 5 H(+)(in) = a quinol + NAD(+) + 4 H(+)(out). NDH-1 shuttles electrons from NADH, via FMN and iron-sulfur (Fe-S) centers, to quinones in the respiratory chain. The immediate electron acceptor for the enzyme in this species is believed to be ubiquinone. Couples the redox reaction to proton translocation (for every two electrons transferred, four hydrogen ions are translocated across the cytoplasmic membrane), and thus conserves the redox energy in a proton gradient. In Pectobacterium atrosepticum (strain SCRI 1043 / ATCC BAA-672) (Erwinia carotovora subsp. atroseptica), this protein is NADH-quinone oxidoreductase subunit A.